The chain runs to 4516 residues: Dynein axonemal heavy chain 1 (4516 aa).

Positions 1-1748 (MVTLSISDTL…YIRAVNAEFI (1748 aa)) are stem. The tract at residues 78–160 (SSGSDKSLKN…RKSPLAGTDK (83 aa)) is disordered. Basic and acidic residues-rich tracts occupy residues 83 to 97 (KSLKNGMEECDKEEA) and 113 to 129 (ENHDLEKMLKESSRNPE). AAA stretches follow at residues 1749-1956 (YGYE…VISA), 2016-2249 (QAIR…TTVK), 2422-2682 (TMMP…VFQG), and 2780-2972 (DYNQ…CCTI). The short motif at 1787-1794 (GPAGTGKT) is the GPAGTGKT motif element. 1787–1794 (GPAGTGKT) lines the ATP pocket. A CFDEFNR motif motif is present at residues 1837-1843 (CFDEFNR). Residues 2054-2061 (GPTGSGKS), 2460-2467 (GPTGTGKT), and 2819-2826 (GVGGSGRS) contribute to the ATP site. The interval 2987–3285 (ATRFLHEIPE…MHKYHFVAKA (299 aa)) is stalk. The stretch at 3293–3394 (LREAQDDLEV…QDTVENLENM (102 aa)) forms a coiled coil. AAA stretches follow at residues 3388–3618 (VENL…EERP) and 3831–4050 (LPAF…SYNS).

Belongs to the dynein heavy chain family. Consists of at least two heavy chains and a number of intermediate and light chains. Expressed in brain.

The protein resides in the cytoplasm. It is found in the cytoskeleton. Its subcellular location is the cilium axoneme. The protein localises to the cell projection. It localises to the cilium. The protein resides in the flagellum. Functionally, force generating protein of cilia required for sperm flagellum motility. Produces force towards the minus ends of microtubules. Dynein has ATPase activity; the force-producing power stroke is thought to occur on release of ADP. Required in spermatozoa for the formation of the inner dynein arms and biogenesis of the axoneme. This Rattus norvegicus (Rat) protein is Dynein axonemal heavy chain 1.